Reading from the N-terminus, the 311-residue chain is Protoheme IX farnesyltransferase (311 aa).

The next 9 helical transmembrane spans lie at 32 to 52 (VMSL…VVVD), 53 to 73 (PLYG…AGAL), 98 to 118 (ISRG…VFLM), 120 to 140 (VLIN…YIVI), 153 to 173 (IVIG…AATG), 180 to 200 (FLLF…LCLF), 226 to 246 (ILVY…TGYA), 248 to 268 (IIYG…AYRL), and 285 to 305 (FFFS…EFLI).

The protein belongs to the UbiA prenyltransferase family. Protoheme IX farnesyltransferase subfamily.

Its subcellular location is the cell inner membrane. The enzyme catalyses heme b + (2E,6E)-farnesyl diphosphate + H2O = Fe(II)-heme o + diphosphate. It functions in the pathway porphyrin-containing compound metabolism; heme O biosynthesis; heme O from protoheme: step 1/1. Functionally, converts heme B (protoheme IX) to heme O by substitution of the vinyl group on carbon 2 of heme B porphyrin ring with a hydroxyethyl farnesyl side group. The chain is Protoheme IX farnesyltransferase from Bartonella bacilliformis (strain ATCC 35685 / KC583 / Herrer 020/F12,63).